A 158-amino-acid polypeptide reads, in one-letter code: Transcriptional repressor NrdR (158 aa).

A zinc finger spans residues 3–34 (CPFCNSEETRVIDTRLTDDGHVVRRRRECEHC). The ATP-cone domain maps to 49–139 (IFVVKKGGQR…VYKEFRDLDH (91 aa)).

Belongs to the NrdR family. The cofactor is Zn(2+).

In terms of biological role, negatively regulates transcription of bacterial ribonucleotide reductase nrd genes and operons by binding to NrdR-boxes. The sequence is that of Transcriptional repressor NrdR from Kosmotoga olearia (strain ATCC BAA-1733 / DSM 21960 / TBF 19.5.1).